A 355-amino-acid chain; its full sequence is UDP-N-acetylglucosamine--N-acetylmuramyl-(pentapeptide) pyrophosphoryl-undecaprenol N-acetylglucosamine transferase (355 aa).

Residues 15 to 17 (TGG), Asn-127, Arg-163, Ser-191, Ile-244, 263 to 268 (ALTVSE), and Gln-288 contribute to the UDP-N-acetyl-alpha-D-glucosamine site.

Belongs to the glycosyltransferase 28 family. MurG subfamily.

It localises to the cell inner membrane. It carries out the reaction di-trans,octa-cis-undecaprenyl diphospho-N-acetyl-alpha-D-muramoyl-L-alanyl-D-glutamyl-meso-2,6-diaminopimeloyl-D-alanyl-D-alanine + UDP-N-acetyl-alpha-D-glucosamine = di-trans,octa-cis-undecaprenyl diphospho-[N-acetyl-alpha-D-glucosaminyl-(1-&gt;4)]-N-acetyl-alpha-D-muramoyl-L-alanyl-D-glutamyl-meso-2,6-diaminopimeloyl-D-alanyl-D-alanine + UDP + H(+). Its pathway is cell wall biogenesis; peptidoglycan biosynthesis. Functionally, cell wall formation. Catalyzes the transfer of a GlcNAc subunit on undecaprenyl-pyrophosphoryl-MurNAc-pentapeptide (lipid intermediate I) to form undecaprenyl-pyrophosphoryl-MurNAc-(pentapeptide)GlcNAc (lipid intermediate II). This is UDP-N-acetylglucosamine--N-acetylmuramyl-(pentapeptide) pyrophosphoryl-undecaprenol N-acetylglucosamine transferase from Salmonella gallinarum (strain 287/91 / NCTC 13346).